A 295-amino-acid chain; its full sequence is Ethanolamine ammonia-lyase small subunit (295 aa).

Residues Val-207, Glu-228, and Cys-258 each contribute to the adenosylcob(III)alamin site.

Belongs to the EutC family. In terms of assembly, the basic unit is a heterodimer which dimerizes to form tetramers. The heterotetramers trimerize; 6 large subunits form a core ring with 6 small subunits projecting outwards. It depends on adenosylcob(III)alamin as a cofactor.

Its subcellular location is the bacterial microcompartment. It catalyses the reaction ethanolamine = acetaldehyde + NH4(+). It functions in the pathway amine and polyamine degradation; ethanolamine degradation. Its function is as follows. Catalyzes the deamination of various vicinal amino-alcohols to oxo compounds. Allows this organism to utilize ethanolamine as the sole source of nitrogen and carbon in the presence of external vitamin B12. This Escherichia coli O157:H7 protein is Ethanolamine ammonia-lyase small subunit.